The chain runs to 181 residues: Trafficking protein particle complex subunit 3-like protein (181 aa).

Residue C68 is the site of S-palmitoyl cysteine attachment.

The protein belongs to the TRAPP small subunits family. BET3 subfamily. Homodimer. Component of the multisubunit TRAPP (transport protein particle) complex, which includes at least TRAPPC2, TRAPPC2L, TRAPPC3, TRAPPC3L, TRAPPC4, TRAPPC5, TRAPPC8, TRAPPC9, TRAPPC10, TRAPPC11 and TRAPPC12.

The protein resides in the golgi apparatus. It localises to the cis-Golgi network. It is found in the endoplasmic reticulum. Its function is as follows. May play a role in vesicular transport from endoplasmic reticulum to Golgi. The polypeptide is Trafficking protein particle complex subunit 3-like protein (Trappc3l) (Mus musculus (Mouse)).